The sequence spans 317 residues: Succinate receptor 1 (317 aa).

At 1–27 (MAQNLSCENWLALENILKKYYLSAFYG) the chain is on the extracellular side. N-linked (GlcNAc...) asparagine glycosylation occurs at asparagine 4. The chain crosses the membrane as a helical span at residues 28-48 (IEFIVGMLGNFTVVFGYLFCM). Residues 49 to 55 (KNWNSSN) lie on the Cytoplasmic side of the membrane. Residues 56 to 76 (VYLFNLSISDLAFLCTLPMLI) traverse the membrane as a helical segment. Residues 77–99 (RSYATGNWTYGDVLCISNRYVLH) lie on the Extracellular side of the membrane. Cysteine 91 and cysteine 168 form a disulfide bridge. A helical membrane pass occupies residues 100 to 120 (ANLYTSILFLTFISIDRYLLM). Over 121–133 (KFPFREHILQKKE) the chain is Cytoplasmic. The chain crosses the membrane as a helical span at residues 134 to 154 (FAILISLAVWVLVTLEVLPML). Residues 155 to 181 (TFITSTPIEKGDSCVDYASSGNPKYSL) are Extracellular-facing. Residues 182 to 202 (IYSLCLTLLGFLIPLSVMCFF) traverse the membrane as a helical segment. Residues 203–226 (YYKMVVFLKKRSQQQATVLSLNKP) lie on the Cytoplasmic side of the membrane. The helical transmembrane segment at 227–247 (LRLVVLAVVIFSVLFTPYHIM) threads the bilayer. Over 248-276 (RNVRIASRLDSWPQGCSQKAIKCLYILTR) the chain is Extracellular. A helical membrane pass occupies residues 277–297 (PLAFLNSAVNPIFYFLVGDHF). The Cytoplasmic segment spans residues 298–317 (RDMLFSKLRQYFKSLTSFRL).

The protein belongs to the G-protein coupled receptor 1 family. Expressed in retina.

It localises to the cell membrane. Its function is as follows. G protein-coupled receptor for succinate able to mediate signaling through Gq/GNAQ or Gi/GNAI second messengers depending on the cell type and the processes regulated. Succinate-SUCNR1 signaling serves as a link between metabolic stress, inflammation and energy homeostasisn. In macrophages, plays a range of immune-regulatory roles. During inflammation, succinate-SUCNR1 signaling may act as an anti-inflammatory mediator or boost inflammation depending on the inflammatory status of cells. Hyperpolarizes M2 macrophages versus M1 phenotype through Gq signaling by regulating the transcription of genes involved in immune function. In activated M1 macrophages, plays a pro-inflammatory role in response to LPS. Expressed in dendritic cells, where it is involved in the sensing of immunological danger and enhances immunity. Mediates succinate triggered intracelleular calcium mobilization, induces migratory responses and acts in synergy with Toll-like receptor ligands for the production of proinflammatory cytokines as well as an enhancement of antigen-specific activation of helper T cells. In the small intestine, mediates the activation of tuft cells by dietary succinate and triggers type 2 immunity. In adipocytes, plays an important role in the control of energy metabolism. In response to succinate, controls leptin expression in an AMPK-JNK-CEBPA-dependent as well as circadian clock-regulated manner. In muscle tissue, is expressed in non-muscle cells and coordinates muscle remodeling in response to the succinate produced during exercise training in a paracrine manner. In retina, acts as a mediator of vessel growth during retinal development. In response to succinate, regulates the production of angiogenic factors, including VEGF, by retinal ganglion neurons. This Rattus norvegicus (Rat) protein is Succinate receptor 1 (Sucnr1).